We begin with the raw amino-acid sequence, 137 residues long: DNA-binding protein H-NS (137 aa).

The DNA-binding element occupies 112–117 (QGRTPA).

It belongs to the histone-like protein H-NS family. As to quaternary structure, homodimer that oligomerizes on DNA into higher-order complexes that form bridges between disparate regions of DNA compacting it. Interacts with Hha, Cnu and StpA.

It is found in the cytoplasm. The protein localises to the nucleoid. Functionally, a DNA-binding protein implicated in transcriptional repression and chromosome organization and compaction. Binds nucleation sites in AT-rich DNA and bridges them, forming higher-order nucleoprotein complexes and condensing the chromosome. As many horizontally transferred genes are AT-rich, it plays a central role in silencing foreign genes. A subset of genes are repressed by H-NS in association with other proteins. The polypeptide is DNA-binding protein H-NS (hns) (Escherichia coli O6:H1 (strain CFT073 / ATCC 700928 / UPEC)).